Reading from the N-terminus, the 273-residue chain is DNA repair protein RecO (273 aa).

Residues 250–273 form a disordered region; it reads NVGQNPSGKDDLNERRDVDGTGES. Over residues 257 to 273 the composition is skewed to basic and acidic residues; sequence GKDDLNERRDVDGTGES.

The protein belongs to the RecO family.

In terms of biological role, involved in DNA repair and RecF pathway recombination. The chain is DNA repair protein RecO from Desulfitobacterium hafniense (strain DSM 10664 / DCB-2).